A 129-amino-acid chain; its full sequence is Phosphoribosyl-AMP cyclohydrolase (129 aa).

Asp85 is a Mg(2+) binding site. Residue Cys86 coordinates Zn(2+). Residues Asp87 and Asp89 each coordinate Mg(2+). Positions 102 and 109 each coordinate Zn(2+).

The protein belongs to the PRA-CH family. Homodimer. The cofactor is Mg(2+). Zn(2+) serves as cofactor.

The protein localises to the cytoplasm. The catalysed reaction is 1-(5-phospho-beta-D-ribosyl)-5'-AMP + H2O = 1-(5-phospho-beta-D-ribosyl)-5-[(5-phospho-beta-D-ribosylamino)methylideneamino]imidazole-4-carboxamide. It functions in the pathway amino-acid biosynthesis; L-histidine biosynthesis; L-histidine from 5-phospho-alpha-D-ribose 1-diphosphate: step 3/9. Catalyzes the hydrolysis of the adenine ring of phosphoribosyl-AMP. The chain is Phosphoribosyl-AMP cyclohydrolase (hisI) from Methanococcus maripaludis (strain DSM 14266 / JCM 13030 / NBRC 101832 / S2 / LL).